The chain runs to 1073 residues: Carbamoyl phosphate synthase large chain (1073 aa).

Positions 1–402 (MPRRIDVRKV…ALQKAIRMLD (402 aa)) are carboxyphosphate synthetic domain. The ATP site is built by Arg-129, Arg-169, Gly-175, Gly-176, Lys-208, Leu-210, Glu-215, Gly-241, Val-242, His-243, Gln-284, and Glu-299. The 196-residue stretch at 133-328 (RETMMKAGLP…LAYIAAKLAL (196 aa)) folds into the ATP-grasp 1 domain. The Mg(2+) site is built by Gln-284, Glu-299, and Asn-301. Gln-284, Glu-299, and Asn-301 together coordinate Mn(2+). Positions 403-555 (IGEPGVVAGP…MSYNAYEDDE (153 aa)) are oligomerization domain. The interval 556-944 (PITTGRPRLI…LKSWLSVQGN (389 aa)) is carbamoyl phosphate synthetic domain. Positions 681–871 (SQLLEELGIK…LMRAAAEAAL (191 aa)) constitute an ATP-grasp 2 domain. ATP-binding residues include Arg-717, Lys-756, Leu-758, Glu-763, Gly-787, Val-788, His-789, Ser-790, Gln-830, and Glu-842. Mg(2+) is bound by residues Gln-830, Glu-842, and Asn-844. Mn(2+)-binding residues include Gln-830, Glu-842, and Asn-844. The region spanning 944–1073 (NRIPPAGSIV…EYWGPNVEPF (130 aa)) is the MGS-like domain. Positions 945 to 1073 (RIPPAGSIVL…EYWGPNVEPF (129 aa)) are allosteric domain.

It belongs to the CarB family. As to quaternary structure, composed of two chains; the small (or glutamine) chain promotes the hydrolysis of glutamine to ammonia, which is used by the large (or ammonia) chain to synthesize carbamoyl phosphate. Tetramer of heterodimers (alpha,beta)4. It depends on Mg(2+) as a cofactor. Requires Mn(2+) as cofactor.

It catalyses the reaction hydrogencarbonate + L-glutamine + 2 ATP + H2O = carbamoyl phosphate + L-glutamate + 2 ADP + phosphate + 2 H(+). The enzyme catalyses hydrogencarbonate + NH4(+) + 2 ATP = carbamoyl phosphate + 2 ADP + phosphate + 2 H(+). Its pathway is amino-acid biosynthesis; L-arginine biosynthesis; carbamoyl phosphate from bicarbonate: step 1/1. The protein operates within pyrimidine metabolism; UMP biosynthesis via de novo pathway; (S)-dihydroorotate from bicarbonate: step 1/3. In terms of biological role, large subunit of the glutamine-dependent carbamoyl phosphate synthetase (CPSase). CPSase catalyzes the formation of carbamoyl phosphate from the ammonia moiety of glutamine, carbonate, and phosphate donated by ATP, constituting the first step of 2 biosynthetic pathways, one leading to arginine and/or urea and the other to pyrimidine nucleotides. The large subunit (synthetase) binds the substrates ammonia (free or transferred from glutamine from the small subunit), hydrogencarbonate and ATP and carries out an ATP-coupled ligase reaction, activating hydrogencarbonate by forming carboxy phosphate which reacts with ammonia to form carbamoyl phosphate. This Hyperthermus butylicus (strain DSM 5456 / JCM 9403 / PLM1-5) protein is Carbamoyl phosphate synthase large chain.